The sequence spans 149 residues: Mediator of RNA polymerase II transcription subunit 9 (149 aa).

The segment at 18–64 (TNPTLDKPNAEATKEEFSSAENRDEKDYLTNQQPKNLSTPSTSSNGE) is disordered. The span at 25 to 45 (PNAEATKEEFSSAENRDEKDY) shows a compositional bias: basic and acidic residues. The segment covering 46–63 (LTNQQPKNLSTPSTSSNG) has biased composition (polar residues). 2 consecutive short sequence motifs (nuclear localization signal) follow at residues 77-99 (RKDPNNLSNQLETLTGSIRHRLK) and 136-149 (KRDVLDDLYRKLQR).

This sequence belongs to the Mediator complex subunit 9 family. As to quaternary structure, component of the Mediator complex, which is composed of at least 21 subunits that form three structurally distinct submodules. The Mediator head module contains MED6, MED8, MED11, SRB4/MED17, SRB5/MED18, ROX3/MED19, SRB2/MED20 and SRB6/MED22, the middle module contains MED1, MED4, NUT1/MED5, MED7, CSE2/MED9, NUT2/MED10, SRB7/MED21 and SOH1/MED31, and the tail module contains MED2, PGD1/MED3, RGR1/MED14, GAL11/MED15 and SIN4/MED16. The head and the middle modules interact directly with RNA polymerase II, whereas the elongated tail module interacts with gene-specific regulatory proteins. CSE2/MED9 interacts directly with MED4.

Its subcellular location is the nucleus. Its function is as follows. Component of the Mediator complex, a coactivator involved in the regulated transcription of nearly all RNA polymerase II-dependent genes. Mediator functions as a bridge to convey information from gene-specific regulatory proteins to the basal RNA polymerase II transcription machinery. The Mediator complex, having a compact conformation in its free form, is recruited to promoters by direct interactions with regulatory proteins and serves for the assembly of a functional preinitiation complex with RNA polymerase II and the general transcription factors. The Mediator complex unfolds to an extended conformation and partially surrounds RNA polymerase II, specifically interacting with the unphosphorylated form of the C-terminal domain (CTD) of RNA polymerase II. The Mediator complex dissociates from the RNA polymerase II holoenzyme and stays at the promoter when transcriptional elongation begins. The chain is Mediator of RNA polymerase II transcription subunit 9 (CSE2) from Saccharomyces cerevisiae (strain ATCC 204508 / S288c) (Baker's yeast).